We begin with the raw amino-acid sequence, 860 residues long: Leucine--tRNA ligase (860 aa).

The short motif at 42–52 (PYPSGRLHMGH) is the 'HIGH' region element. Positions 619–623 (KMSKS) match the 'KMSKS' region motif. K622 is a binding site for ATP.

Belongs to the class-I aminoacyl-tRNA synthetase family.

The protein resides in the cytoplasm. It carries out the reaction tRNA(Leu) + L-leucine + ATP = L-leucyl-tRNA(Leu) + AMP + diphosphate. The sequence is that of Leucine--tRNA ligase from Histophilus somni (strain 129Pt) (Haemophilus somnus).